Here is a 452-residue protein sequence, read N- to C-terminus: Trigger factor (452 aa).

Positions 162 to 247 constitute a PPIase FKBP-type domain; that stretch reads GDTVTIDYKG…IHEVKSKQLP (86 aa). Residues 427-452 are disordered; the sequence is AKAKLEAKEAEEAEDKEEAEDKKENK.

This sequence belongs to the FKBP-type PPIase family. Tig subfamily.

It localises to the cytoplasm. The enzyme catalyses [protein]-peptidylproline (omega=180) = [protein]-peptidylproline (omega=0). Its function is as follows. Involved in protein export. Acts as a chaperone by maintaining the newly synthesized protein in an open conformation. Functions as a peptidyl-prolyl cis-trans isomerase. The sequence is that of Trigger factor from Lactobacillus helveticus (strain DPC 4571).